A 337-amino-acid polypeptide reads, in one-letter code: Casein kinase II subunit alpha (337 aa).

The Protein kinase domain maps to 47 to 332 (YEIIRKIGRG…TREAMEHPYF (286 aa)). Residues 53–61 (IGRGKYSEV) and Lys76 contribute to the ATP site. Asp164 serves as the catalytic Proton acceptor.

This sequence belongs to the protein kinase superfamily. CMGC Ser/Thr protein kinase family. CK2 subfamily. In terms of assembly, tetramer of two alpha and two beta chains.

It carries out the reaction L-seryl-[protein] + ATP = O-phospho-L-seryl-[protein] + ADP + H(+). The enzyme catalyses L-threonyl-[protein] + ATP = O-phospho-L-threonyl-[protein] + ADP + H(+). Casein kinases are operationally defined by their preferential utilization of acidic proteins such as caseins as substrates. The alpha chain contains the catalytic site. The chain is Casein kinase II subunit alpha (casK) from Dictyostelium discoideum (Social amoeba).